A 110-amino-acid chain; its full sequence is UPF0060 membrane protein Nmul_A0351 (110 aa).

Helical transmembrane passes span 7–27 (LFLF…PYLW), 33–53 (SAWL…LLTL), 63–83 (AAYG…VDGV), and 87–107 (AWDM…MFGP).

Belongs to the UPF0060 family.

It localises to the cell inner membrane. This Nitrosospira multiformis (strain ATCC 25196 / NCIMB 11849 / C 71) protein is UPF0060 membrane protein Nmul_A0351.